The following is a 131-amino-acid chain: Protein DfrA (131 aa).

Belongs to the RutC family.

The polypeptide is Protein DfrA (dfrA) (Myxococcus xanthus).